We begin with the raw amino-acid sequence, 497 residues long: Di-/tripeptide transporter (497 aa).

The Cytoplasmic segment spans residues 1 to 36; it reads MQNLNKTEKTFFGQPRGLLTLFQTEFWERFSYYGMR. The helical transmembrane segment at 37–55 threads the bilayer; that stretch reads AILVYYLYALTTADNAGLG. At 56–64 the chain is on the extracellular side; it reads LPKAQAMAI. Residues 65–83 traverse the membrane as a helical segment; sequence VSIYGALVYLSTIVGGWVA. Topologically, residues 84–92 are cytoplasmic; that stretch reads DRLLGASRT. The chain crosses the membrane as a helical span at residues 93 to 111; sequence IFLGGILITLGHIALATPF. The Extracellular segment spans residues 112–115; sequence GLSS. Residues 116–134 traverse the membrane as a helical segment; sequence LFVALFLIILGTGMLKPNI. Topologically, residues 135 to 154 are cytoplasmic; sequence SNMVGHLYSKDDSRRDTGFN. Residues 155–173 traverse the membrane as a helical segment; the sequence is IFVVGINMGSLIAPLIVGT. The Extracellular segment spans residues 174–181; it reads VGQGVNYH. A helical membrane pass occupies residues 182–200; that stretch reads LGFSLAAIGMIFALFAYWY. The Cytoplasmic segment spans residues 201–224; the sequence is GRLRHFPEIGREPSNPMDSKARRN. Residues 225–243 form a helical membrane-spanning segment; sequence FLITLTIVVIVAIIGFFLL. Topologically, residues 244 to 254 are extracellular; sequence YQASPANFINN. The chain crosses the membrane as a helical span at residues 255–273; that stretch reads FINVLSIIGIVVPIIYFVM. Topologically, residues 274–293 are cytoplasmic; that stretch reads MFTSKKVESDERRKLTAYIP. Residues 294 to 312 form a helical membrane-spanning segment; it reads LFLSAIVFWAIEEQSSTII. The Extracellular segment spans residues 313 to 335; that stretch reads AVWGESRSNLDPTWFGITFHIDP. A helical membrane pass occupies residues 336–354; that stretch reads SWYQLLNPLFIVLLSPIFV. Residues 355–372 are Cytoplasmic-facing; it reads RLWNKLGERQPSTIVKFG. Residues 373-391 traverse the membrane as a helical segment; sequence LGLMLTGISYLIMTLPGLL. Over 392–425 the chain is Extracellular; the sequence is NGTSGRASALWLVLMFAVQMAGELLVSPVGLSVS. A helical transmembrane segment spans residues 426–444; that stretch reads TKLAPVAFQSQMMAMWFLA. Residues 445–497 are Cytoplasmic-facing; the sequence is DSTSQAINAQITPLFKAATEVHFFAITGIIGIIVGIILLIVKKPILKLMGDVR.

The protein belongs to the major facilitator superfamily. Proton-dependent oligopeptide transporter (POT/PTR) (TC 2.A.17) family.

The protein localises to the cell membrane. Functionally, proton-dependent uptake of di- or tri-peptides. The polypeptide is Di-/tripeptide transporter (dtpT) (Lactococcus lactis subsp. lactis (strain IL1403) (Streptococcus lactis)).